The following is a 411-amino-acid chain: Protein PHLOEM PROTEIN 2-LIKE A5 (411 aa).

The region spanning 20–157 (TGPQVFINFR…KWTEALFSVC (138 aa)) is the TIR domain. Residue E94 is part of the active site.

It catalyses the reaction NAD(+) + H2O = ADP-D-ribose + nicotinamide + H(+). This chain is Protein PHLOEM PROTEIN 2-LIKE A5 (PP2A5), found in Arabidopsis thaliana (Mouse-ear cress).